The following is a 55-amino-acid chain: Large ribosomal subunit protein bL33C (55 aa).

This sequence belongs to the bacterial ribosomal protein bL33 family.

This is Large ribosomal subunit protein bL33C from Kineococcus radiotolerans (strain ATCC BAA-149 / DSM 14245 / SRS30216).